Here is a 224-residue protein sequence, read N- to C-terminus: DNA mismatch repair protein MutH (224 aa).

This sequence belongs to the MutH family.

The protein localises to the cytoplasm. Functionally, sequence-specific endonuclease that cleaves unmethylated GATC sequences. It is involved in DNA mismatch repair. The sequence is that of DNA mismatch repair protein MutH from Histophilus somni (strain 2336) (Haemophilus somnus).